A 273-amino-acid polypeptide reads, in one-letter code: Protein BRANCHLESS TRICHOME (273 aa).

Positions 1–12 (MKDMKMQSSPET) are enriched in polar residues. Residues 1-30 (MKDMKMQSSPETMMTRIPTPDPHSTGVRED) form a disordered region. Residues 69 to 199 (IKVFMESELG…GERERNRMMK (131 aa)) are a coiled coil.

Interacts with STI.

In terms of biological role, acts as a key regulator of trichome branching. Could participate with STI in the same pathway. Also plays a role in integrating endoreplication levels with cell shape. The polypeptide is Protein BRANCHLESS TRICHOME (BLT) (Arabidopsis thaliana (Mouse-ear cress)).